We begin with the raw amino-acid sequence, 276 residues long: Diacetylchitobiose uptake system permease protein DasC (276 aa).

The next 6 helical transmembrane spans lie at 14–34 (TAVVLFIGLVFPVYWMFATAF), 74–94 (LIVTVCAVVFSLVIALAGSFA), 105–125 (GFIVGFMLAQMAPWEVMVIAI), 137–157 (SLVPLTLFYMMMILPFTILTL), 186–206 (VILPLLAPGLMSTSMFGFITA), and 241–261 (GATMAASSLFAIPILILFVYL). Residues 70-261 (VSNSLIVTVC…IPILILFVYL (192 aa)) form the ABC transmembrane type-1 domain.

Belongs to the binding-protein-dependent transport system permease family. In terms of assembly, the complex is composed of two ATP-binding proteins (MsiK), two transmembrane proteins (DasB and DasC) and a solute-binding protein (DasA).

The protein localises to the cell membrane. Part of the ABC transporter complex DasABC-MsiK involved in N,N'-diacetylchitobiose ((GlcNAc)2) uptake. Responsible for the translocation of the substrate across the membrane. In Streptomyces coelicolor (strain ATCC BAA-471 / A3(2) / M145), this protein is Diacetylchitobiose uptake system permease protein DasC.